Here is a 404-residue protein sequence, read N- to C-terminus: S-adenosylmethionine synthase (404 aa).

His17 contributes to the ATP binding site. Asp19 serves as a coordination point for Mg(2+). Residue Glu45 participates in K(+) binding. Residues Glu58 and Gln101 each coordinate L-methionine. Positions 101-111 (QSPDIAMGVDQ) are flexible loop. ATP is bound by residues 177–179 (DGK), 244–245 (RF), Asp253, 259–260 (RK), Ala276, and Lys280. Residue Asp253 coordinates L-methionine. Lys284 contributes to the L-methionine binding site.

Belongs to the AdoMet synthase family. In terms of assembly, homotetramer; dimer of dimers. Mg(2+) serves as cofactor. It depends on K(+) as a cofactor.

Its subcellular location is the cytoplasm. The enzyme catalyses L-methionine + ATP + H2O = S-adenosyl-L-methionine + phosphate + diphosphate. It functions in the pathway amino-acid biosynthesis; S-adenosyl-L-methionine biosynthesis; S-adenosyl-L-methionine from L-methionine: step 1/1. Functionally, catalyzes the formation of S-adenosylmethionine (AdoMet) from methionine and ATP. The overall synthetic reaction is composed of two sequential steps, AdoMet formation and the subsequent tripolyphosphate hydrolysis which occurs prior to release of AdoMet from the enzyme. The chain is S-adenosylmethionine synthase from Geobacillus thermodenitrificans (strain NG80-2).